Reading from the N-terminus, the 63-residue chain is Cecropin-A2 (63 aa).

Residues 1–23 form the signal peptide; sequence MNFYNIFVFVALILAITIGQSEA. Residue arginine 62 is modified to Arginine amide.

This sequence belongs to the cecropin family. Strongly expressed in larval, pupal and adult fat body and hemocytes after injection of bacteria. Maximal expression in the adult involves fat body cells of the head, thorax and abdomen.

Its subcellular location is the secreted. Cecropins have lytic and antibacterial activity against several Gram-positive and Gram-negative bacteria. In Drosophila melanogaster (Fruit fly), this protein is Cecropin-A2.